We begin with the raw amino-acid sequence, 380 residues long: Alcohol dehydrogenase 1 (380 aa).

Zn(2+) is bound by residues cysteine 48, threonine 50, histidine 70, cysteine 100, cysteine 103, cysteine 106, cysteine 114, and cysteine 178. Residues threonine 50 and histidine 70 each contribute to the an alcohol site. Threonine 50 provides a ligand contact to NAD(+). NAD(+) contacts are provided by residues 203-208, aspartate 227, arginine 232, threonine 273, valine 296, 296-298, phenylalanine 323, and arginine 373; these read GLGAVG and VGV.

Belongs to the zinc-containing alcohol dehydrogenase family. Homodimer. Homotetramer. Zn(2+) serves as cofactor.

The protein localises to the cytoplasm. It carries out the reaction a primary alcohol + NAD(+) = an aldehyde + NADH + H(+). It catalyses the reaction a secondary alcohol + NAD(+) = a ketone + NADH + H(+). This is Alcohol dehydrogenase 1 (ADH1) from Solanum tuberosum (Potato).